The following is a 393-amino-acid chain: Methylthioribose kinase (393 aa).

Residues N38, K53, and 107 to 109 each bind ATP; that span reads EDL. D225 is a substrate binding site. Position 242–244 (242–244) interacts with ATP; it reads DPE. R332 lines the substrate pocket.

The protein belongs to the methylthioribose kinase family. As to quaternary structure, homodimer.

The enzyme catalyses 5-(methylsulfanyl)-D-ribose + ATP = 5-(methylsulfanyl)-alpha-D-ribose 1-phosphate + ADP + H(+). Its pathway is amino-acid biosynthesis; L-methionine biosynthesis via salvage pathway; S-methyl-5-thio-alpha-D-ribose 1-phosphate from S-methyl-5'-thioadenosine (hydrolase route): step 2/2. Its function is as follows. Catalyzes the phosphorylation of methylthioribose into methylthioribose-1-phosphate. This Bacillus cereus (strain B4264) protein is Methylthioribose kinase.